A 257-amino-acid polypeptide reads, in one-letter code: Phosphonates import ATP-binding protein PhnC (257 aa).

The 245-residue stretch at 4-248 (IEFKDVSKVY…VFNHIYGRSI (245 aa)) folds into the ABC transporter domain.

The protein belongs to the ABC transporter superfamily. Phosphonates importer (TC 3.A.1.9.1) family. As to quaternary structure, the complex is composed of two ATP-binding proteins (PhnC), two transmembrane proteins (PhnE) and a solute-binding protein (PhnD).

Its subcellular location is the cell membrane. The catalysed reaction is phosphonate(out) + ATP + H2O = phosphonate(in) + ADP + phosphate + H(+). In terms of biological role, part of the ABC transporter complex PhnCDE involved in phosphonates import. Responsible for energy coupling to the transport system. The chain is Phosphonates import ATP-binding protein PhnC from Staphylococcus epidermidis (strain ATCC 35984 / DSM 28319 / BCRC 17069 / CCUG 31568 / BM 3577 / RP62A).